Consider the following 169-residue polypeptide: Protein YABBY 7 (169 aa).

The segment at 21–48 (CSFCATVLLVSVPCSSVLRVVAVQCGHC) adopts a C4-type zinc-finger fold. Positions 63–122 (SASIELTPQELDAGPPPGEYSDESSGDDREGRDAEDDAPAPAAAAVANKPPGRKQRTPSA) are disordered.

Belongs to the YABBY family. In terms of tissue distribution, expressed in leaf sheaths and flowers.

It is found in the nucleus. This is Protein YABBY 7 (YAB7) from Oryza sativa subsp. japonica (Rice).